Reading from the N-terminus, the 604-residue chain is Beta-alanine transporter (604 aa).

At methionine 1–serine 23 the chain is on the cytoplasmic side. A helical transmembrane segment spans residues valine 24–alanine 44. Topologically, residues threonine 45–serine 151 are extracellular. N-linked (GlcNAc...) asparagine glycosylation is found at asparagine 68 and asparagine 88. A helical transmembrane segment spans residues phenylalanine 152–phenylalanine 172. Over glycine 173–arginine 182 the chain is Cytoplasmic. A helical membrane pass occupies residues proline 183–tryptophan 203. Residues asparagine 204 to arginine 212 are Extracellular-facing. A helical membrane pass occupies residues phenylalanine 213–leucine 233. The Cytoplasmic segment spans residues valine 234–threonine 243. A helical transmembrane segment spans residues isoleucine 244–valine 264. At arginine 265 to arginine 268 the chain is on the extracellular side. The helical transmembrane segment at glutamate 269–proline 289 threads the bilayer. Over glutamate 290–threonine 362 the chain is Cytoplasmic. The helical transmembrane segment at leucine 363 to alanine 383 threads the bilayer. Residues proline 384–glutamate 390 are Extracellular-facing. Residues isoleucine 391 to glycine 411 form a helical membrane-spanning segment. Residues leucine 412–arginine 418 lie on the Cytoplasmic side of the membrane. The helical transmembrane segment at tryptophan 419–proline 439 threads the bilayer. Residues aspartate 440–threonine 442 are Extracellular-facing. The helical transmembrane segment at leucine 443–methionine 463 threads the bilayer. Over alanine 464–arginine 473 the chain is Cytoplasmic. The helical transmembrane segment at glycine 474 to isoleucine 494 threads the bilayer. At asparagine 495–methionine 501 the chain is on the extracellular side. The helical transmembrane segment at leucine 502–leucine 522 threads the bilayer. At leucine 523–leucine 604 the chain is on the cytoplasmic side.

Belongs to the major facilitator (TC 2.A.1) superfamily. Organic cation transporter (TC 2.A.1.19) family. In terms of tissue distribution, expressed in the head and predominantly in the retinal pigment cells of the compound eye.

It localises to the cell membrane. In terms of biological role, beta-alanine transporter required for the uptake of beta-alanine by the glia. Required for the recycling process of the neurotransmitter histamine in photoreceptor neurons of the compound eye and therefore for photoreceptor synaptic transmission. Following histamine release from photoreceptors and its uptake by glia, histamine is conjugated to beta-alanine by e/Ebony to form the inactive metabolite, carcinine. The sequence is that of Beta-alanine transporter from Drosophila melanogaster (Fruit fly).